A 575-amino-acid polypeptide reads, in one-letter code: Glycosyltransferase family 92 protein At1g27200 (575 aa).

Residues 22–44 (FLSQRYLILCFCCFFVLLFFLSS) traverse the membrane as a helical segment. Residues 293 to 540 (LCVCTMLWNQ…TEAIEPPDWK (248 aa)) form the GT92 domain.

Belongs to the glycosyltransferase 92 family.

It is found in the membrane. In Arabidopsis thaliana (Mouse-ear cress), this protein is Glycosyltransferase family 92 protein At1g27200.